The primary structure comprises 374 residues: DNA/RNA-binding protein ALBA4 (374 aa).

This sequence belongs to the histone-like Alba family.

The protein resides in the cytoplasm. It localises to the cell cortex. It is found in the perinuclear region. Its function is as follows. Possesses DNA- and RNA-binding activities. Binds to DNA with relaxed sequence specificity. May associate with the subtelomeric TARE6 repeats. Regulates the abundance of transcript sub-populations in a stage-specific manner. Regulates activation of male gametocytes. Participates in the coordination of sporozoite development in the oocyst. The polypeptide is DNA/RNA-binding protein ALBA4 (Plasmodium yoelii yoelii).